Consider the following 736-residue polypeptide: MTDTLFDRADIDALLAGRHPDPFACLGPHRHDDQIVVRALLPGAERVRALSPDGAELGTLACVDRAGCFAGTIAHDGGAPHYLLSIDWPDAHQVTDDAYAFGTLLDEAALARFSAGDPEAVLDCLGATPVRIDDTDGVRFAVWAPSAQRVSVVGDFNAWDGRRHPMRLRRPSGVWELFVPGIGAGERYKYELCAADGRVLPHKADPCARATEAPPRTASVVADVAALHAFAWHDDGWMHARPRHDDRYRVPWSIYEVHPESWQRIPEQMDRSATWDELAERLIPYVKGMGFTHVEFMPIAEYPFGGSWGYQPLAQFAPSARFGPVEGFARFVDRAHAAGIGVLVDWVPAHFPNDAHGLAQFDGSALYEHADPREGMHPDWNTCVFNVGRTEVSAFLVASALAWARRYHVDGIRVDAVASMLYRDYSRKEGEWVPNVYGGRENLESVAFLRRLNDTLHGDAAPAGVVTVAEESTAWPGVTAPTADGGLGFDFKWNMGWMHDTLAYLHEDPIHRRYHHDRMTFGLVYAFSERFVLPLSHDEVVHGKGSLVAKMPGDAWQRLATLRAYFGFMWAHPGKKLLFMGSEFAQWSEFAHDATPHWDLLDAPAHRGVQRLVRDLNRAYAAEPALHALDCHAAGFAWLIGDDRDNSVFAFARRDDTGRLVVAVCNFTPVPRAGYRLGLPAPGHWRELMNTDAASYGGANAGNDGAVWAEAVPAHGEAWSASLRLPPLATLWLTPA.

Catalysis depends on Asp-415, which acts as the Nucleophile. Residue Glu-470 is the Proton donor of the active site.

The protein belongs to the glycosyl hydrolase 13 family. GlgB subfamily. As to quaternary structure, monomer.

It carries out the reaction Transfers a segment of a (1-&gt;4)-alpha-D-glucan chain to a primary hydroxy group in a similar glucan chain.. It functions in the pathway glycan biosynthesis; glycogen biosynthesis. Functionally, catalyzes the formation of the alpha-1,6-glucosidic linkages in glycogen by scission of a 1,4-alpha-linked oligosaccharide from growing alpha-1,4-glucan chains and the subsequent attachment of the oligosaccharide to the alpha-1,6 position. The protein is 1,4-alpha-glucan branching enzyme GlgB of Burkholderia orbicola (strain AU 1054).